The primary structure comprises 177 residues: Large ribosomal subunit protein uL6 (177 aa).

This sequence belongs to the universal ribosomal protein uL6 family. In terms of assembly, part of the 50S ribosomal subunit.

Its function is as follows. This protein binds to the 23S rRNA, and is important in its secondary structure. It is located near the subunit interface in the base of the L7/L12 stalk, and near the tRNA binding site of the peptidyltransferase center. The polypeptide is Large ribosomal subunit protein uL6 (Pseudomonas paraeruginosa (strain DSM 24068 / PA7) (Pseudomonas aeruginosa (strain PA7))).